Here is a 422-residue protein sequence, read N- to C-terminus: UDP-N-acetylmuramoylalanine--D-glutamate ligase (422 aa).

102–108 serves as a coordination point for ATP; it reads GTNGKTT.

Belongs to the MurCDEF family.

Its subcellular location is the cytoplasm. It carries out the reaction UDP-N-acetyl-alpha-D-muramoyl-L-alanine + D-glutamate + ATP = UDP-N-acetyl-alpha-D-muramoyl-L-alanyl-D-glutamate + ADP + phosphate + H(+). Its pathway is cell wall biogenesis; peptidoglycan biosynthesis. In terms of biological role, cell wall formation. Catalyzes the addition of glutamate to the nucleotide precursor UDP-N-acetylmuramoyl-L-alanine (UMA). In Helicobacter pylori (strain HPAG1), this protein is UDP-N-acetylmuramoylalanine--D-glutamate ligase.